Reading from the N-terminus, the 236-residue chain is Small ribosomal subunit protein uS2c (236 aa).

This sequence belongs to the universal ribosomal protein uS2 family.

It localises to the plastid. The protein localises to the chloroplast. The sequence is that of Small ribosomal subunit protein uS2c (rps2) from Buxus microphylla (Littleleaf boxwood).